A 480-amino-acid polypeptide reads, in one-letter code: F-box/LRR-repeat protein 14 (480 aa).

One can recognise an F-box domain in the interval 11-58 (DRQMDELPDHLVWDILSKLHTTDDRNSLSLSCKRFFSLDNEQRYSLRI). LRR repeat units lie at residues 61–86 (GLVP…EIIY), 94–119 (GKQV…TLSF), 120–144 (CTFI…KLNF), 145–170 (APRI…HLIR), 171–196 (CLNV…CIKN), 197–222 (CRAI…QFEV), 229–257 (MKVY…SLGN), 258–283 (CIIA…HLDM), 284–309 (CTGV…SLRV), 322–347 (TLRL…KISF), 355–379 (LFSF…SLDH), 380–404 (VCVF…ELVH), 405–429 (CQEV…KLSK), 430–454 (CLGV…VVED), and 455–480 (CPQV…SWMY).

This is F-box/LRR-repeat protein 14 (FBL14) from Arabidopsis thaliana (Mouse-ear cress).